A 204-amino-acid chain; its full sequence is DNA polymerase epsilon subunit D (204 aa).

A compositionally biased stretch (basic and acidic residues) spans 165-177 (KEVQRRRAEKTPA). The disordered stretch occupies residues 165–204 (KEVQRRRAEKTPAADEGQAEEGDAADEEEGSHKRAKLDEH). The segment covering 181 to 193 (GQAEEGDAADEEE) has biased composition (acidic residues). Positions 194–204 (GSHKRAKLDEH) are enriched in basic and acidic residues.

As to quaternary structure, heterotetramer. Consists of four subunits: POL2, DPB2, DPB3 and DPB4.

The protein localises to the nucleus. Functionally, as accessory component of the DNA polymerase epsilon (DNA polymerase II) participates in chromosomal DNA replication. In Eremothecium gossypii (strain ATCC 10895 / CBS 109.51 / FGSC 9923 / NRRL Y-1056) (Yeast), this protein is DNA polymerase epsilon subunit D (DPB4).